We begin with the raw amino-acid sequence, 484 residues long: tRNA sulfurtransferase (484 aa).

The THUMP domain maps to 62–166; it reads GPVIDELVRI…DDSYHIAHRR (105 aa). ATP is bound by residues 184-185, lysine 266, glycine 288, and glutamine 297; that span reads LI. Cysteine 345 and cysteine 456 are joined by a disulfide. The Rhodanese domain maps to 404-482; sequence PSVDDVIIDV…GHGNIKVYAP (79 aa). Residue cysteine 456 is the Cysteine persulfide intermediate of the active site.

This sequence belongs to the ThiI family.

It is found in the cytoplasm. It carries out the reaction [ThiI sulfur-carrier protein]-S-sulfanyl-L-cysteine + a uridine in tRNA + 2 reduced [2Fe-2S]-[ferredoxin] + ATP + H(+) = [ThiI sulfur-carrier protein]-L-cysteine + a 4-thiouridine in tRNA + 2 oxidized [2Fe-2S]-[ferredoxin] + AMP + diphosphate. The catalysed reaction is [ThiS sulfur-carrier protein]-C-terminal Gly-Gly-AMP + S-sulfanyl-L-cysteinyl-[cysteine desulfurase] + AH2 = [ThiS sulfur-carrier protein]-C-terminal-Gly-aminoethanethioate + L-cysteinyl-[cysteine desulfurase] + A + AMP + 2 H(+). It participates in cofactor biosynthesis; thiamine diphosphate biosynthesis. Its function is as follows. Catalyzes the ATP-dependent transfer of a sulfur to tRNA to produce 4-thiouridine in position 8 of tRNAs, which functions as a near-UV photosensor. Also catalyzes the transfer of sulfur to the sulfur carrier protein ThiS, forming ThiS-thiocarboxylate. This is a step in the synthesis of thiazole, in the thiamine biosynthesis pathway. The sulfur is donated as persulfide by IscS. The chain is tRNA sulfurtransferase from Marinobacter nauticus (strain ATCC 700491 / DSM 11845 / VT8) (Marinobacter aquaeolei).